Consider the following 272-residue polypeptide: Shikimate dehydrogenase (NADP(+)) (272 aa).

Residues 14-16 and threonine 61 each bind shikimate; that span reads SKS. Lysine 65 serves as the catalytic Proton acceptor. Glutamate 77 contributes to the NADP(+) binding site. Positions 86 and 102 each coordinate shikimate. Residues 126–130, 149–154, and methionine 213 each bind NADP(+); these read GAGGA and NRTASR. Tyrosine 215 serves as a coordination point for shikimate. Glycine 237 is a binding site for NADP(+).

Belongs to the shikimate dehydrogenase family. As to quaternary structure, homodimer.

The catalysed reaction is shikimate + NADP(+) = 3-dehydroshikimate + NADPH + H(+). The protein operates within metabolic intermediate biosynthesis; chorismate biosynthesis; chorismate from D-erythrose 4-phosphate and phosphoenolpyruvate: step 4/7. Involved in the biosynthesis of the chorismate, which leads to the biosynthesis of aromatic amino acids. Catalyzes the reversible NADPH linked reduction of 3-dehydroshikimate (DHSA) to yield shikimate (SA). In Salmonella heidelberg (strain SL476), this protein is Shikimate dehydrogenase (NADP(+)).